Here is a 327-residue protein sequence, read N- to C-terminus: Immunodominant envelope protein p35 (327 aa).

The tract at residues 41–69 is disordered; it reads KNGYDDYRDPPSPKPLPKSKQEPNADDKV. Over residues 59 to 69 the composition is skewed to basic and acidic residues; sequence SKQEPNADDKV. A helical transmembrane segment spans residues 291–311; sequence ITMMFLIAIVIIIGLAIFDIN.

This sequence belongs to the poxviruses protein p35 family.

It is found in the virion membrane. In terms of biological role, envelope protein that binds to the cell surface to provide virion attachment to target cell. The protein is Immunodominant envelope protein p35 of Fowlpox virus (strain NVSL) (FPV).